The sequence spans 249 residues: Protein YIP5 (249 aa).

5 consecutive transmembrane segments (helical) span residues 87 to 107 (LYGP…SNSI), 131 to 151 (ASII…ILVW), 164 to 184 (LYGY…PFGL), 188 to 208 (LASH…SIVF), and 228 to 248 (LLFG…LIFF).

The protein belongs to the YIP1 family. As to quaternary structure, interacts with the YIP1 family members yip1 and yip4, and several Rab GTPases. The C-terminal cysteines in the Rab GTPase ypt2 are essential for the interaction. Interacts with snx3.

The protein resides in the membrane. Its function is as follows. Possible role in vesicle-mediated transport. May be involved in proper membrane localization of Rab GTPases. This is Protein YIP5 from Schizosaccharomyces pombe (strain 972 / ATCC 24843) (Fission yeast).